The following is a 431-amino-acid chain: Glutamate-1-semialdehyde 2,1-aminomutase (431 aa).

Lys269 carries the post-translational modification N6-(pyridoxal phosphate)lysine.

Belongs to the class-III pyridoxal-phosphate-dependent aminotransferase family. HemL subfamily. As to quaternary structure, homodimer. It depends on pyridoxal 5'-phosphate as a cofactor.

It is found in the cytoplasm. The enzyme catalyses (S)-4-amino-5-oxopentanoate = 5-aminolevulinate. It participates in porphyrin-containing compound metabolism; protoporphyrin-IX biosynthesis; 5-aminolevulinate from L-glutamyl-tRNA(Glu): step 2/2. This Francisella tularensis subsp. tularensis (strain WY96-3418) protein is Glutamate-1-semialdehyde 2,1-aminomutase.